The chain runs to 207 residues: NADH-ubiquinone oxidoreductase chain 6 (207 aa).

The next 5 membrane-spanning stretches (helical) occupy residues 1–21, 28–48, 50–70, 88–108, and 158–178; these read MDFLFYIFSSLTLISGSLVIQ, SVLFLVLVFFNAAGLLVLLGL, FFALIFLVVYVGAIAVLFLFV, YLPVGGVLGVLFLFEICILID, and FYFFLVASLILLVAMIGAIVL.

It belongs to the complex I subunit 6 family.

The protein localises to the mitochondrion membrane. The catalysed reaction is a ubiquinone + NADH + 5 H(+)(in) = a ubiquinol + NAD(+) + 4 H(+)(out). Functionally, core subunit of the mitochondrial membrane respiratory chain NADH dehydrogenase (Complex I) that is believed to belong to the minimal assembly required for catalysis. Complex I functions in the transfer of electrons from NADH to the respiratory chain. The immediate electron acceptor for the enzyme is believed to be ubiquinone. In Prototheca wickerhamii, this protein is NADH-ubiquinone oxidoreductase chain 6 (ND6).